We begin with the raw amino-acid sequence, 113 residues long: LSM complex subunit lsm7 (113 aa).

Over residues 1–17 (MSSLQKRPGPGNSSQPT) the composition is skewed to polar residues. Residues 1–23 (MSSLQKRPGPGNSSQPTERPRKE) form a disordered region. The Sm domain maps to 23–102 (ESILDLSRYQ…LVLIAPMDGS (80 aa)).

Belongs to the snRNP Sm proteins family. As to quaternary structure, component of the heptameric LSM1-LSM7 complex that forms a seven-membered ring structure with a donut shape. The LSm subunits are arranged in the order lsm1, lsm2, lsm3, lsm6, lsm5, lsm7 and lsm4. Component of the heptameric LSM2-LSM8 complex that forms a seven-membered ring structure with a donut shape. The LSm subunits are arranged in the order lsm8, lsm2, lsm3, lsm6, lsm5, lsm7 and lsm4.

The protein resides in the cytoplasm. The protein localises to the nucleus. Functionally, component of LSm protein complexes, which are involved in RNA processing and may function in a chaperone-like manner. Component of the cytoplasmic LSM1-LSM7 complex which is involved in mRNA degradation by activating the decapping step. The LSM1-LSM7 complex loads onto the 3'-end of single stranded RNA. Component of the nuclear LSM2-LSM8 complex, which is involved in spliceosome assembly. The LSM2-LSM8 complex plays a role in the biogenesis of the spliceosomal U4/U6-U5 tri-snRNP complex by accelerating prp24-mediated annealing of U4/U6 di-snRNA. The LSM2-LSM8 complex binds U6 snRNA terminating with a cyclic 2',3' phosphate group; RNA with an unmodified 3' hydroxyl or non-cyclic 3' phosphate is bound less tightly. This Schizosaccharomyces pombe (strain 972 / ATCC 24843) (Fission yeast) protein is LSM complex subunit lsm7 (lsm7).